A 274-amino-acid chain; its full sequence is AA9 family lytic polysaccharide monooxygenase A (274 aa).

Residues 1–22 form the signal peptide; that stretch reads MHVPQFISTGALLALLARPAAA. Position 23 (His-23) interacts with Cu(2+). The cysteines at positions 63 and 194 are disulfide-linked. Residues Gly-67, Asp-98, and Ser-100 each contribute to the (1,4-beta-D-glucosyl)n site. His-101 is a binding site for Cu(2+). His-174 contributes to the O2 binding site. Residue Asp-177 coordinates (1,4-beta-D-glucosyl)n. Tyr-191 is a binding site for Cu(2+).

The protein belongs to the polysaccharide monooxygenase AA9 family. The cofactor is Cu(2+).

It localises to the secreted. It carries out the reaction [(1-&gt;4)-beta-D-glucosyl]n+m + reduced acceptor + O2 = 4-dehydro-beta-D-glucosyl-[(1-&gt;4)-beta-D-glucosyl]n-1 + [(1-&gt;4)-beta-D-glucosyl]m + acceptor + H2O.. In terms of biological role, lytic polysaccharide monooxygenase (LPMO) that depolymerizes crystalline and amorphous polysaccharides via the oxidation of scissile alpha- or beta-(1-4)-glycosidic bonds, yielding C4 oxidation products. Catalysis by LPMOs requires the reduction of the active-site copper from Cu(II) to Cu(I) by a reducing agent and H(2)O(2) or O(2) as a cosubstrate. Cleaves a range of polysaccharides, including cellulose, xyloglucan, mixed-linkage glucan and glucomannan. The polypeptide is AA9 family lytic polysaccharide monooxygenase A (Collariella virescens (Soil fungus)).